The primary structure comprises 382 residues: Regulatory protein RapC (382 aa).

5 TPR repeats span residues 102–138, 149–182, 183–216, 223–256, and 263–296; these read YYVNFFRGMYEFDKREFISAITYYKQAEKKLSFVADH, AEAYYYMKQTYFSLINIKNAYEIYVEQETYNVRI, IQCHFVFGVNLMDERNFEQAARHFKLALNMAQAE, GRAYYNLGLCYYNQDLLDPAIDYFEKAVSTFESS, and PQAYFLITLIYYKQGKHDKASEYHKRGYEYAKET.

It belongs to the Rap family. Homodimer. Interacts specifically with the C-terminal DNA-binding domain of ComA. Interacts with CSF.

Its subcellular location is the cytoplasm. Inhibited by the competence and sporulation stimulating factor (CSF), encoded by phrC, which prevents RapC-ComA interaction. Functionally, involved in the regulation of genetic competence development. Inhibits the activity of ComA, a transcriptional factor that regulates the development of genetic competence. Acts by binding to ComA, independently of its phosphorylation state, leading to the inhibition of ComA DNA-binding activity. Does not dephosphorylate phospho-ComA and does not affect the phosphorylation level of the ComP-ComA system. This chain is Regulatory protein RapC (rapC), found in Bacillus subtilis (strain 168).